The primary structure comprises 156 residues: Male-specific protein scotti (156 aa).

Residues 26 to 48 form a disordered region; sequence TADAGDDADTLEDGQQQQQQQHQ. The N-linked (GlcNAc...) asparagine glycan is linked to Asn-137.

The protein belongs to the male-specific scotti family.

Its function is as follows. Post-meiotically transcribed gene that has a role in late spermiogenesis; required for actin cone progression during spermatid individualization. The protein is Male-specific protein scotti of Drosophila erecta (Fruit fly).